A 100-amino-acid chain; its full sequence is Urease subunit gamma (100 aa).

This sequence belongs to the urease gamma subunit family. In terms of assembly, heterotrimer of UreA (gamma), UreB (beta) and UreC (alpha) subunits. Three heterotrimers associate to form the active enzyme.

It is found in the cytoplasm. It catalyses the reaction urea + 2 H2O + H(+) = hydrogencarbonate + 2 NH4(+). It participates in nitrogen metabolism; urea degradation; CO(2) and NH(3) from urea (urease route): step 1/1. The protein is Urease subunit gamma of Nostoc punctiforme (strain ATCC 29133 / PCC 73102).